The chain runs to 604 residues: Choline transporter-like protein 3 (604 aa).

N90 and N103 each carry an N-linked (GlcNAc...) asparagine glycan. The next 5 helical transmembrane spans lie at 165-185, 195-215, 237-257, 286-306, and 330-350; these read DTIL…LFTF, IIIS…WWLY, LAFA…IFTL, LWTF…LLSL, and YLWW…LTCQ. 2 N-linked (GlcNAc...) asparagine glycosylation sites follow: N454 and N472. A run of 2 helical transmembrane segments spans residues 485-505 and 514-534; these read FIIF…GLMA and VWAI…HSFL. The span at 581–592 shows a compositional bias: polar residues; that stretch reads NARSQGHKNSLP. Residues 581–604 are disordered; it reads NARSQGHKNSLPNEEGTELRPIVR.

Belongs to the CTL (choline transporter-like) family. In terms of tissue distribution, expressed in colon, kidney and ileum.

The protein resides in the membrane. The chain is Choline transporter-like protein 3 (Slc44a3) from Rattus norvegicus (Rat).